The following is a 121-amino-acid chain: DLWQFGQMILKETGKIPFPYYGAYGCYCGWGGRGGKPKAGTDRCCYVHDCCYGKLTSCPKTDDRYSYSWLDGTIVCGEDDPCKELCECDKKIAVCFRENLGTYNKKYRYHLKSCKKADKPC.

7 disulfides stabilise this stretch: Cys-26–Cys-114, Cys-28–Cys-45, Cys-44–Cys-95, Cys-50–Cys-121, Cys-51–Cys-88, Cys-58–Cys-82, and Cys-76–Cys-86. Positions 27, 29, and 31 each coordinate Ca(2+). The active site involves His-48. Asp-49 contacts Ca(2+). Asp-89 is a catalytic residue.

Ca(2+) serves as cofactor. Expressed by the venom gland.

Its subcellular location is the secreted. The catalysed reaction is a 1,2-diacyl-sn-glycero-3-phosphocholine + H2O = a 1-acyl-sn-glycero-3-phosphocholine + a fatty acid + H(+). In terms of biological role, snake venom phospholipase A2 (PLA2) that induces a slight blockade of neuromuscular contraction in an indirectly stimulated chick biventer cervicis nerve-muscle preparation. Does not inhibit contraction of chick biventer cervicic nerve-muscle preparation in response to treatment with acetylcholine or KCl. The neuromuscular blockade is mediated by inhibitory action at the presynaptic motor nerve endings. Lyses skeletal myoblasts and myotubes in vitro, and intramuscular injection causes local muscle necrosis. Induces edema in the mouse foot pad. Induces a transient increase of IL-6 levels. PLA2 catalyzes the calcium-dependent hydrolysis of the 2-acyl groups in 3-sn-phosphoglycerides. This is Basic phospholipase A2 BmjeTX-I from Bothrops marajoensis (Marajo lancehead).